The primary structure comprises 293 residues: AM-toxin biosynthesis protein 14 (293 aa).

5 helical membrane-spanning segments follow: residues 33–53, 73–93, 148–168, 183–203, and 221–241; these read SATA…EVYI, IAVN…ALVL, GVLA…LCVW, LVPI…LWIL, and VWCL…TPLT.

It is found in the membrane. The protein operates within mycotoxin biosynthesis. Part of the gene clusters that mediate the biosynthesis of AM-toxins, host-selective toxins (HSTs) causing Alternaria blotch on apple, a worldwide distributed disease. AM-toxins are cyclic depsipeptides containing the 3 residues 2-hydroxy-isovaleric acid (2-HIV), dehydroalanine, L-alanine which are common for all 3 AM-toxins I to III. The fourth precursor is L-alpha-amino-methoxyphenyl-valeric acid (L-Amv) for AM-toxin I, L-alpha-amino-phenyl-valeric acid (L-Apv) for AM-toxin II, and L-alpha-amino-hydroxyphenyl-valeric acid (L-Ahv) for AM-toxin III. AM-toxins have two target sites for affecting susceptible apple cells; they cause invagination of the plasma membrane and electrolyte loss and chloroplast disorganization. The non-ribosomal peptide synthetase AMT1 contains 4 catalytic modules and is responsible for activation of each residue in AM-toxin. The aldo-keto reductase AMT2 catalyzes the conversion of 2-keto-isovaleric acid (2-KIV) to 2-hydroxy-isovaleric acid (2-HIV), one of the precursor residues incorporated by AMT1 during AM-toxin biosynthesis, by reduction of its ketone to an alcohol. The cytochrome P450 monooxygenase AMT3 and the thioesterase AMT4 are also important for AM-toxin production, but their exact function within the AM-toxin biosynthesis are not known yet. Up to 21 proteins (including AMT1 to AMT4) are predicted to be involved in AM-toxin biosynthesis since their expression ishighly up-regulated in AM-toxin-producing cultures. This chain is AM-toxin biosynthesis protein 14, found in Alternaria alternata (Alternaria rot fungus).